A 292-amino-acid chain; its full sequence is Syntenin-2 (292 aa).

2 PDZ domains span residues 108 to 187 and 192 to 267; these read EIHL…IRDR and TVTM…IPTV.

As to quaternary structure, monomer and homodimer. Interacts with SDCBP. Interacts with TM4SF1.

It is found in the cytoplasm. The protein resides in the nucleus. The protein localises to the nucleolus. It localises to the nucleoplasm. Its subcellular location is the cell membrane. It is found in the nucleus speckle. Binds phosphatidylinositol 4,5-bisphosphate (PIP2). May play a role in the organization of nuclear PIP2, cell division and cell survival. In Mus musculus (Mouse), this protein is Syntenin-2 (Sdcbp2).